The following is a 34-amino-acid chain: Photosystem II reaction center protein M (34 aa).

The helical transmembrane segment at 5-25 threads the bilayer; sequence ILAFIATALFILVPTSFLLII.

Belongs to the PsbM family. As to quaternary structure, PSII is composed of 1 copy each of membrane proteins PsbA, PsbB, PsbC, PsbD, PsbE, PsbF, PsbH, PsbI, PsbJ, PsbK, PsbL, PsbM, PsbT, PsbX, PsbY, PsbZ, Psb30/Ycf12, at least 3 peripheral proteins of the oxygen-evolving complex and a large number of cofactors. It forms dimeric complexes.

The protein resides in the plastid. It is found in the chloroplast thylakoid membrane. Its function is as follows. One of the components of the core complex of photosystem II (PSII). PSII is a light-driven water:plastoquinone oxidoreductase that uses light energy to abstract electrons from H(2)O, generating O(2) and a proton gradient subsequently used for ATP formation. It consists of a core antenna complex that captures photons, and an electron transfer chain that converts photonic excitation into a charge separation. This subunit is found at the monomer-monomer interface. This is Photosystem II reaction center protein M from Triticum aestivum (Wheat).